The sequence spans 544 residues: Chaperonin GroEL (544 aa).

Residues 30–33, Lys51, 87–91, Gly415, 480–482, and Asp496 contribute to the ATP site; these read TLGP, DGTTT, and DAA.

It belongs to the chaperonin (HSP60) family. Forms a cylinder of 14 subunits composed of two heptameric rings stacked back-to-back. Interacts with the co-chaperonin GroES.

It localises to the cytoplasm. The enzyme catalyses ATP + H2O + a folded polypeptide = ADP + phosphate + an unfolded polypeptide.. Its function is as follows. Together with its co-chaperonin GroES, plays an essential role in assisting protein folding. The GroEL-GroES system forms a nano-cage that allows encapsulation of the non-native substrate proteins and provides a physical environment optimized to promote and accelerate protein folding. This is Chaperonin GroEL from Sulfurihydrogenibium sp. (strain YO3AOP1).